Consider the following 126-residue polypeptide: MALEAATAPRALLAACLVLLVLGGGTGPSSVLRAPGRRPAAVPAAAERLLRCRAYLVPARRTPARTAAALSAVCTSAPAAPWASSTACPAGATSPKPTAPLEAGTWHACCNGWQEGRGIRSVSISQ.

Residues 1–23 (MALEAATAPRALLAACLVLLVLG) constitute a signal peptide (or 24, or 26).

As to expression, enhanced expression in male flowers. Accumulates in the tapetum.

This Zea mays (Maize) protein is MFS14 protein (MFS14).